The sequence spans 367 residues: Glutamate 5-kinase 2 (367 aa).

Residue Lys-10 participates in ATP binding. Residues Ser-50, Asp-136, and Asn-148 each coordinate substrate. ATP-binding positions include Thr-168–Asp-169 and Thr-210–Lys-216. Residues Ser-275–Asp-353 enclose the PUA domain.

It belongs to the glutamate 5-kinase family.

Its subcellular location is the cytoplasm. The enzyme catalyses L-glutamate + ATP = L-glutamyl 5-phosphate + ADP. Its pathway is amino-acid biosynthesis; L-proline biosynthesis; L-glutamate 5-semialdehyde from L-glutamate: step 1/2. Catalyzes the transfer of a phosphate group to glutamate to form L-glutamate 5-phosphate. This Pseudoalteromonas translucida (strain TAC 125) protein is Glutamate 5-kinase 2.